The chain runs to 338 residues: uncharacterized protein (338 aa).

The N-terminal stretch at 1–29 (MIKQLCKNITICTLALSTTFTVLPATSFA) is a signal peptide.

It belongs to the aerolysin family.

This is an uncharacterized protein from Staphylococcus aureus (strain USA300).